A 109-amino-acid chain; its full sequence is Large ribosomal subunit protein uL22 (109 aa).

The protein belongs to the universal ribosomal protein uL22 family. Part of the 50S ribosomal subunit.

Functionally, this protein binds specifically to 23S rRNA; its binding is stimulated by other ribosomal proteins, e.g. L4, L17, and L20. It is important during the early stages of 50S assembly. It makes multiple contacts with different domains of the 23S rRNA in the assembled 50S subunit and ribosome. The globular domain of the protein is located near the polypeptide exit tunnel on the outside of the subunit, while an extended beta-hairpin is found that lines the wall of the exit tunnel in the center of the 70S ribosome. The polypeptide is Large ribosomal subunit protein uL22 (Neisseria gonorrhoeae (strain ATCC 700825 / FA 1090)).